Reading from the N-terminus, the 729-residue chain is Dipeptidyl peptidase 3 (729 aa).

His459 contacts Zn(2+). The active site involves Glu460. 2 residues coordinate Zn(2+): His464 and Glu517.

It belongs to the peptidase M49 family. Requires Zn(2+) as cofactor.

It is found in the cytoplasm. The enzyme catalyses Release of an N-terminal dipeptide from a peptide comprising four or more residues, with broad specificity. Also acts on dipeptidyl 2-naphthylamides.. This is Dipeptidyl peptidase 3 (dpp3) from Nematostella vectensis (Starlet sea anemone).